Here is a 619-residue protein sequence, read N- to C-terminus: 1-deoxy-D-xylulose-5-phosphate synthase (619 aa).

Residues histidine 80 and 121 to 123 (GHS) contribute to the thiamine diphosphate site. A Mg(2+)-binding site is contributed by aspartate 152. Residues 153 to 154 (GA), asparagine 181, tyrosine 288, and glutamate 370 contribute to the thiamine diphosphate site. Position 181 (asparagine 181) interacts with Mg(2+).

Belongs to the transketolase family. DXPS subfamily. As to quaternary structure, homodimer. The cofactor is Mg(2+). Thiamine diphosphate is required as a cofactor.

The catalysed reaction is D-glyceraldehyde 3-phosphate + pyruvate + H(+) = 1-deoxy-D-xylulose 5-phosphate + CO2. It participates in metabolic intermediate biosynthesis; 1-deoxy-D-xylulose 5-phosphate biosynthesis; 1-deoxy-D-xylulose 5-phosphate from D-glyceraldehyde 3-phosphate and pyruvate: step 1/1. Functionally, catalyzes the acyloin condensation reaction between C atoms 2 and 3 of pyruvate and glyceraldehyde 3-phosphate to yield 1-deoxy-D-xylulose-5-phosphate (DXP). The protein is 1-deoxy-D-xylulose-5-phosphate synthase of Yersinia pseudotuberculosis serotype O:3 (strain YPIII).